We begin with the raw amino-acid sequence, 231 residues long: Large ribosomal subunit protein uL1 (231 aa).

This sequence belongs to the universal ribosomal protein uL1 family. As to quaternary structure, part of the 50S ribosomal subunit.

In terms of biological role, binds directly to 23S rRNA. The L1 stalk is quite mobile in the ribosome, and is involved in E site tRNA release. Its function is as follows. Protein L1 is also a translational repressor protein, it controls the translation of the L11 operon by binding to its mRNA. The sequence is that of Large ribosomal subunit protein uL1 from Carboxydothermus hydrogenoformans (strain ATCC BAA-161 / DSM 6008 / Z-2901).